A 261-amino-acid polypeptide reads, in one-letter code: Cytochrome c oxidase subunit 3 (261 aa).

At 1–15 (MAHQAHSYHMVDPSP) the chain is on the mitochondrial matrix side. A helical transmembrane segment spans residues 16–34 (WPIFGAITALLTTSGLIMW). The Mitochondrial intermembrane portion of the chain corresponds to 35–40 (FHYNSI). Residues 41 to 66 (ALLTAGLLSMLLVMIQWWRDVVREST) traverse the membrane as a helical segment. Residues 67 to 72 (FQGHHT) lie on the Mitochondrial matrix side of the membrane. The helical transmembrane segment at 73 to 105 (PTVQKGLRYGMILFITSEAFFFLGFFWAFFHSS) threads the bilayer. Topologically, residues 106–128 (LAPTPELGGQWPPTGIKPLNPLE) are mitochondrial intermembrane. A helical membrane pass occupies residues 129–152 (VPLLNTAILLASGVTVTWAHHSIT). Over 153–155 (EGN) the chain is Mitochondrial matrix. The helical transmembrane segment at 156-183 (RKQAIHALTLTILLGFYFTALQAMEYHE) threads the bilayer. The Mitochondrial intermembrane portion of the chain corresponds to 184-190 (ASFSIAD). The helical transmembrane segment at 191–223 (SVYGSTFFVATGFHGLHVIIGSSFLTICLLRLI) threads the bilayer. At 224–232 (KFHFTSNHH) the chain is on the mitochondrial matrix side. A helical membrane pass occupies residues 233-256 (FGFEAAAWYWHFVDIIWLFLYMSM). At 257–261 (YWWGS) the chain is on the mitochondrial intermembrane side.

The protein belongs to the cytochrome c oxidase subunit 3 family. As to quaternary structure, component of the cytochrome c oxidase (complex IV, CIV), a multisubunit enzyme composed of 14 subunits. The complex is composed of a catalytic core of 3 subunits MT-CO1, MT-CO2 and MT-CO3, encoded in the mitochondrial DNA, and 11 supernumerary subunits COX4I, COX5A, COX5B, COX6A, COX6B, COX6C, COX7A, COX7B, COX7C, COX8 and NDUFA4, which are encoded in the nuclear genome. The complex exists as a monomer or a dimer and forms supercomplexes (SCs) in the inner mitochondrial membrane with NADH-ubiquinone oxidoreductase (complex I, CI) and ubiquinol-cytochrome c oxidoreductase (cytochrome b-c1 complex, complex III, CIII), resulting in different assemblies (supercomplex SCI(1)III(2)IV(1) and megacomplex MCI(2)III(2)IV(2)).

It localises to the mitochondrion inner membrane. It carries out the reaction 4 Fe(II)-[cytochrome c] + O2 + 8 H(+)(in) = 4 Fe(III)-[cytochrome c] + 2 H2O + 4 H(+)(out). Component of the cytochrome c oxidase, the last enzyme in the mitochondrial electron transport chain which drives oxidative phosphorylation. The respiratory chain contains 3 multisubunit complexes succinate dehydrogenase (complex II, CII), ubiquinol-cytochrome c oxidoreductase (cytochrome b-c1 complex, complex III, CIII) and cytochrome c oxidase (complex IV, CIV), that cooperate to transfer electrons derived from NADH and succinate to molecular oxygen, creating an electrochemical gradient over the inner membrane that drives transmembrane transport and the ATP synthase. Cytochrome c oxidase is the component of the respiratory chain that catalyzes the reduction of oxygen to water. Electrons originating from reduced cytochrome c in the intermembrane space (IMS) are transferred via the dinuclear copper A center (CU(A)) of subunit 2 and heme A of subunit 1 to the active site in subunit 1, a binuclear center (BNC) formed by heme A3 and copper B (CU(B)). The BNC reduces molecular oxygen to 2 water molecules using 4 electrons from cytochrome c in the IMS and 4 protons from the mitochondrial matrix. This Coturnix japonica (Japanese quail) protein is Cytochrome c oxidase subunit 3 (MT-CO3).